The sequence spans 520 residues: Maturase K (520 aa).

This sequence belongs to the intron maturase 2 family. MatK subfamily.

The protein resides in the plastid. The protein localises to the chloroplast. Usually encoded in the trnK tRNA gene intron. Probably assists in splicing its own and other chloroplast group II introns. This is Maturase K from Galanthus elwesii (Giant snowdrop).